Consider the following 103-residue polypeptide: Large ribosomal subunit protein uL24 (103 aa).

This sequence belongs to the universal ribosomal protein uL24 family. In terms of assembly, part of the 50S ribosomal subunit.

One of two assembly initiator proteins, it binds directly to the 5'-end of the 23S rRNA, where it nucleates assembly of the 50S subunit. Functionally, one of the proteins that surrounds the polypeptide exit tunnel on the outside of the subunit. This chain is Large ribosomal subunit protein uL24, found in Geobacillus sp. (strain WCH70).